We begin with the raw amino-acid sequence, 408 residues long: MSWDQVWIDVNLATMDPSISAPYGAITNAAIAVKDGKIAWLGPRSELPAFDVLSIPVYRGKGGWITPGLIDAHTHLIFAGNRANEFELRLQGASYEEIARSGGGIISTVKACREADEAELFELGRQRLNALAKEGVTTVEIKSGYGLDTETELKILRVARELGKHHHVDVKTTFLGAHAIPPEYKDNSDGYVDLIINKMLPAVIAENLADAVDVFCENIAFNLEQTERVLSAAKAAGLEIKLHAEQLTNMGGSALAARLGAKSVDHIEYLDEAGVKALSESGTCAVLLPGAFYFLRETQIPPIDLLRQYGVPMVLASDFNPGSSPICSTLLMLNMGCTLFRLTPEEALKGLTLNAAKALGIEDNVGSLVVGKQADFCLWDIATPAQLAYSYGVNPCKDVVKNGKLVHQ.

Fe(3+) is bound by residues His73 and His75. The Zn(2+) site is built by His73 and His75. 4-imidazolone-5-propanoate is bound by residues Arg82, Tyr145, and His178. Position 145 (Tyr145) interacts with N-formimidoyl-L-glutamate. A Fe(3+)-binding site is contributed by His243. His243 is a Zn(2+) binding site. Gln246 lines the 4-imidazolone-5-propanoate pocket. Residue Asp318 coordinates Fe(3+). Residue Asp318 coordinates Zn(2+). Residues Asn320 and Gly322 each contribute to the N-formimidoyl-L-glutamate site. Ser323 provides a ligand contact to 4-imidazolone-5-propanoate.

It belongs to the metallo-dependent hydrolases superfamily. HutI family. Zn(2+) is required as a cofactor. Requires Fe(3+) as cofactor.

Its subcellular location is the cytoplasm. The enzyme catalyses 4-imidazolone-5-propanoate + H2O = N-formimidoyl-L-glutamate. Its pathway is amino-acid degradation; L-histidine degradation into L-glutamate; N-formimidoyl-L-glutamate from L-histidine: step 3/3. In terms of biological role, catalyzes the hydrolytic cleavage of the carbon-nitrogen bond in imidazolone-5-propanoate to yield N-formimidoyl-L-glutamate. It is the third step in the universal histidine degradation pathway. The protein is Imidazolonepropionase of Shewanella baltica (strain OS185).